The chain runs to 379 residues: Succinyl-diaminopimelate desuccinylase (379 aa).

Zn(2+) is bound at residue His68. Asp70 is a catalytic residue. Asp101 is a binding site for Zn(2+). Residue Glu134 is the Proton acceptor of the active site. 3 residues coordinate Zn(2+): Glu135, Glu163, and His352.

The protein belongs to the peptidase M20A family. DapE subfamily. In terms of assembly, homodimer. Zn(2+) is required as a cofactor. It depends on Co(2+) as a cofactor.

The enzyme catalyses N-succinyl-(2S,6S)-2,6-diaminopimelate + H2O = (2S,6S)-2,6-diaminopimelate + succinate. Its pathway is amino-acid biosynthesis; L-lysine biosynthesis via DAP pathway; LL-2,6-diaminopimelate from (S)-tetrahydrodipicolinate (succinylase route): step 3/3. In terms of biological role, catalyzes the hydrolysis of N-succinyl-L,L-diaminopimelic acid (SDAP), forming succinate and LL-2,6-diaminopimelate (DAP), an intermediate involved in the bacterial biosynthesis of lysine and meso-diaminopimelic acid, an essential component of bacterial cell walls. The polypeptide is Succinyl-diaminopimelate desuccinylase (Dinoroseobacter shibae (strain DSM 16493 / NCIMB 14021 / DFL 12)).